Here is a 324-residue protein sequence, read N- to C-terminus: Probable metal transport system membrane protein CPn_0346/CP_0414/CPj0346/CpB0353 (324 aa).

Helical transmembrane passes span methionine 1 to phenylalanine 21, isoleucine 39 to valine 59, alanine 64 to phenylalanine 84, glycine 94 to isoleucine 114, serine 125 to threonine 145, glutamate 165 to phenylalanine 185, leucine 201 to valine 221, alanine 226 to isoleucine 246, serine 252 to serine 272, and serine 286 to phenylalanine 306.

Belongs to the ABC-3 integral membrane protein family.

It is found in the cell inner membrane. Functionally, part of an ATP-driven transport system CPn_0346/CPn_0347/CPn_0348/CPn_0349 for a metal. In Chlamydia pneumoniae (Chlamydophila pneumoniae), this protein is Probable metal transport system membrane protein CPn_0346/CP_0414/CPj0346/CpB0353.